The primary structure comprises 760 residues: Xaa-Pro dipeptidyl-peptidase (760 aa).

Residues serine 349, aspartate 469, and histidine 499 each act as charge relay system in the active site.

The protein belongs to the peptidase S15 family. Homodimer.

The protein localises to the cytoplasm. It carries out the reaction Hydrolyzes Xaa-Pro-|- bonds to release unblocked, N-terminal dipeptides from substrates including Ala-Pro-|-p-nitroanilide and (sequentially) Tyr-Pro-|-Phe-Pro-|-Gly-Pro-|-Ile.. Functionally, removes N-terminal dipeptides sequentially from polypeptides having unsubstituted N-termini provided that the penultimate residue is proline. The chain is Xaa-Pro dipeptidyl-peptidase from Streptococcus pyogenes serotype M1.